Consider the following 481-residue polypeptide: Delta 4,5-hexuronate-2-O-sulfatase (481 aa).

Ser-64 carries the 3-oxoalanine (Ser) modification. Zn(2+) is bound by residues Cys-225, Cys-226, His-462, and His-469. The tract at residues 453–481 (VDADPRCRNHTPGYPSHEGPGAREILKRK) is disordered. Residues 472–481 (PGAREILKRK) are compositionally biased toward basic and acidic residues.

It belongs to the sulfatase family. It depends on Zn(2+) as a cofactor. In terms of processing, the conversion to 3-oxoalanine (also known as C-formylglycine, FGly), of a serine or cysteine residue in prokaryotes and of a cysteine residue in eukaryotes, is critical for catalytic activity.

Functionally, exosulfatase involved in the degradation of the glycosaminoglycans (GAGs) chondroitin sulfate (CS), dermatan sulfate (DS) and heparan sulfate (HS). 2-O-sulfatase active on unsaturated non-reducing end hexuronate units. Has a slight preference for HS-derived structures. GAG-specific sulfatases play a key role in the persistence of the major human gut symbiont B.thetaiotaomicron in the host gastrointestinal tract. This is Delta 4,5-hexuronate-2-O-sulfatase from Bacteroides thetaiotaomicron (strain ATCC 29148 / DSM 2079 / JCM 5827 / CCUG 10774 / NCTC 10582 / VPI-5482 / E50).